The sequence spans 150 residues: Leukotriene C4 synthase (150 aa).

The Cytoplasmic segment spans residues 1 to 6 (MKEETA). A helical transmembrane segment spans residues 7-27 (LLATVTLLGVLLQAYFSLQVI). At 28–48 (SARRTFHVSPPLTSGPPEFER) the chain is on the lumenal side. Position 30 (Arg30) interacts with glutathione. Arg31 (proton donor) is an active-site residue. Ser36 carries the phosphoserine modification. A helical transmembrane segment spans residues 49–69 (VFRAQVNCSEYFPLFLATLWV). Glutathione is bound by residues 51–55 (RAQVN) and 58–59 (EY). Topologically, residues 70 to 73 (AGIF) are cytoplasmic. Residues 74–94 (FHEGAAALCGLFYLFARLRYF) traverse the membrane as a helical segment. Position 93–97 (93–97 (YFQGY)) interacts with glutathione. Topologically, residues 95–104 (QGYARSAQHR) are lumenal. Arg104 acts as the Proton acceptor in catalysis. Residues 105 to 124 (LDPLYASARALWLLVAMAAL) form a helical membrane-spanning segment. The Cytoplasmic segment spans residues 125–150 (GLLVHFLPGTLRAALFRWLQVLLPMA).

This sequence belongs to the MAPEG family. In terms of assembly, homotrimer. Interacts with ALOX5AP and ALOX5. In terms of processing, phosphorylation at Ser-36 by RPS6KB1 inhibits the leukotriene-C4 synthase activity.

It localises to the nucleus outer membrane. Its subcellular location is the endoplasmic reticulum membrane. The protein resides in the nucleus membrane. It carries out the reaction leukotriene C4 = leukotriene A4 + glutathione. It catalyses the reaction (13S,14S)-epoxy-(4Z,7Z,9E,11E,16Z,19Z)-docosahexaenoate + glutathione = (13R)-S-glutathionyl-(14S)-hydroxy-(4Z,7Z,9E,11E,16Z,19Z)-docosahexaenoate. Its pathway is lipid metabolism; leukotriene C4 biosynthesis. With respect to regulation, inhibited by MK886. Catalyzes the conjugation of leukotriene A4 with reduced glutathione (GSH) to form leukotriene C4 with high specificity. Can also catalyze the transfer of a glutathionyl group from glutathione (GSH) to 13(S),14(S)-epoxy-docosahexaenoic acid to form maresin conjugate in tissue regeneration 1 (MCTR1), a bioactive lipid mediator that possess potent anti-inflammatory and proresolving actions. The sequence is that of Leukotriene C4 synthase (Ltc4s) from Rattus norvegicus (Rat).